The sequence spans 529 residues: Probable alpha-galactosidase A (529 aa).

Positions 1-19 are cleaved as a signal peptide; it reads MKALFAAITMAHALLQTQA. A disulfide bond links C42 and C74. N45, N83, N89, and N119 each carry an N-linked (GlcNAc...) asparagine glycan. C122 and C152 form a disulfide bridge. The active-site Nucleophile is D150. N-linked (GlcNAc...) asparagine glycosylation occurs at N199. Catalysis depends on D208, which acts as the Proton donor. N-linked (GlcNAc...) asparagine glycosylation is present at N351. One can recognise a Ricin B-type lectin domain in the interval 408-528; it reads RVDAVSTGIV…GLPSGVRVSG (121 aa). Disulfide bonds link C425-C438 and C462-C475.

Belongs to the glycosyl hydrolase 27 family.

It is found in the secreted. The enzyme catalyses Hydrolysis of terminal, non-reducing alpha-D-galactose residues in alpha-D-galactosides, including galactose oligosaccharides, galactomannans and galactolipids.. Hydrolyzes a variety of simple alpha-D-galactoside as well as more complex molecules such as oligosaccharides and polysaccharides. This Aspergillus terreus (strain NIH 2624 / FGSC A1156) protein is Probable alpha-galactosidase A (aglA).